Reading from the N-terminus, the 85-residue chain is ATPAELATKAGCAVCHQPTAKGLGPSYQEIAKKYKGQAGAPALMAERVRKGSVGIFGKLPMTPTPPARISDADLKLVIDWILKTP.

Cys-12, Cys-15, His-16, and Met-61 together coordinate heme c.

It belongs to the cytochrome c family. Binds 1 heme c group covalently per subunit.

Functionally, cytochrome c2 is found mainly in purple, non-sulfur, photosynthetic bacteria where it functions as the electron donor to the oxidized bacteriochlorophyll in the photophosphorylation pathway. However, it may also have a role in the respiratory chain and is found in some non-photosynthetic bacteria. In Rubrivivax gelatinosus (Rhodocyclus gelatinosus), this protein is Cytochrome c2.